Consider the following 442-residue polypeptide: Cyclic adenylate deaminase (442 aa).

Belongs to the metallo-dependent hydrolases superfamily. Adenosine and AMP deaminases family. It depends on Zn(2+) as a cofactor.

It catalyses the reaction 3',5'-cyclic AMP + H2O + H(+) = 3',5'-cyclic IMP + NH4(+). Its function is as follows. Deaminates cAMP into cIMP, thereby repressing cAMP dependent metabolism or genes. The protein is Cyclic adenylate deaminase (add) of Leptospira interrogans serogroup Icterohaemorrhagiae serovar copenhageni (strain Fiocruz L1-130).